The primary structure comprises 161 residues: uncharacterized protein (161 aa).

The span at 1–16 (MPRAGRAPAEGGPAPG) shows a compositional bias: low complexity. 3 disordered regions span residues 1-23 (MPRA…SRCL), 50-91 (GRPV…TQSA), and 140-161 (RGPA…WRIS).

This is an uncharacterized protein from Homo sapiens (Human).